The following is a 524-amino-acid chain: MSDPVIKRALVSVSDKTGIVDFCRELSELGVEIFSTGGTLKTLQDAGIAAASISTITGFPEIMDGRVKTLHPKIHGGLLAVRENANHVKQAADNGISFIDLVVVNLYPFEATVAKPNVSFEDAIENIDIGGPSMLRSAAKNNESVTVVTDSADYALVLQEMRANNGATTRATRLHLALKVFELTSRYDRAIATYLAGKVSAAEAAASTMSVQLAKELDMRYGENPHQNAGLYRLTDSNGTRSFEEFFEKLHGKELSYNNMLDIAAATSLIEEFRGEEPTVVIIKHTNPCGVAQASSLVDAWHRAFSTDTQAPFGGIVAFNRPLDMAAAQAVNEIFTEILIAPAFEDGVLELLMKKKDRRLVVQKKALPQSGWEFKSTPFGMLVQERDSKIVAKEDLKVVTKRQPTEAEIADLMFAWKICKHIKSNTILYVKNRQTYGVGAGQMSRVDSSKIARWKASEVNLDLHGSVVASDAFFPFADGLLAAAEAGVTAVIQPGGSIRDNEVIEAADANNLAMVFTGMRHFKH.

The region spanning 1-149 (MSDPVIKRAL…KNNESVTVVT (149 aa)) is the MGS-like domain.

It belongs to the PurH family.

The catalysed reaction is (6R)-10-formyltetrahydrofolate + 5-amino-1-(5-phospho-beta-D-ribosyl)imidazole-4-carboxamide = 5-formamido-1-(5-phospho-D-ribosyl)imidazole-4-carboxamide + (6S)-5,6,7,8-tetrahydrofolate. It catalyses the reaction IMP + H2O = 5-formamido-1-(5-phospho-D-ribosyl)imidazole-4-carboxamide. It participates in purine metabolism; IMP biosynthesis via de novo pathway; 5-formamido-1-(5-phospho-D-ribosyl)imidazole-4-carboxamide from 5-amino-1-(5-phospho-D-ribosyl)imidazole-4-carboxamide (10-formyl THF route): step 1/1. Its pathway is purine metabolism; IMP biosynthesis via de novo pathway; IMP from 5-formamido-1-(5-phospho-D-ribosyl)imidazole-4-carboxamide: step 1/1. This is Bifunctional purine biosynthesis protein PurH from Chlorobium chlorochromatii (strain CaD3).